Here is a 283-residue protein sequence, read N- to C-terminus: 4-diphosphocytidyl-2-C-methyl-D-erythritol kinase (283 aa).

The active site involves lysine 10. 99–109 (PMGGGLGGGSS) is an ATP binding site. Aspartate 141 is a catalytic residue.

This sequence belongs to the GHMP kinase family. IspE subfamily. In terms of assembly, homodimer.

The enzyme catalyses 4-CDP-2-C-methyl-D-erythritol + ATP = 4-CDP-2-C-methyl-D-erythritol 2-phosphate + ADP + H(+). It functions in the pathway isoprenoid biosynthesis; isopentenyl diphosphate biosynthesis via DXP pathway; isopentenyl diphosphate from 1-deoxy-D-xylulose 5-phosphate: step 3/6. In terms of biological role, catalyzes the phosphorylation of the position 2 hydroxy group of 4-diphosphocytidyl-2C-methyl-D-erythritol. This Shigella boydii serotype 18 (strain CDC 3083-94 / BS512) protein is 4-diphosphocytidyl-2-C-methyl-D-erythritol kinase.